The chain runs to 24 residues: Coenzyme PQQ synthesis protein A (24 aa).

A cross-link (pyrroloquinoline quinone (Glu-Tyr)) is located at residues 16–20 (EVTMY).

It belongs to the PqqA family.

It participates in cofactor biosynthesis; pyrroloquinoline quinone biosynthesis. In terms of biological role, required for coenzyme pyrroloquinoline quinone (PQQ) biosynthesis. PQQ is probably formed by cross-linking a specific glutamate to a specific tyrosine residue and excising these residues from the peptide. The sequence is that of Coenzyme PQQ synthesis protein A from Acinetobacter baumannii (strain SDF).